The sequence spans 155 residues: Ribosome maturation factor RimP (155 aa).

The protein belongs to the RimP family.

Its subcellular location is the cytoplasm. Its function is as follows. Required for maturation of 30S ribosomal subunits. The protein is Ribosome maturation factor RimP of Listeria monocytogenes serotype 4b (strain CLIP80459).